A 373-amino-acid chain; its full sequence is WAT1-related protein At4g08300 (373 aa).

The next 10 membrane-spanning stretches (helical) occupy residues 11–31, 41–61, 67–87, 102–122, 139–159, 185–205, 219–239, 255–275, 281–301, and 306–326; these read PIIA…ITMV, ILAT…ALIL, PKMT…EPLL, TYSS…AVIF, IGTA…GPAI, WVTG…FFIL, LVMW…LIMV, AAVY…SIVI, VFTT…GVLV, and IHLG…SVVW. 2 consecutive EamA domains span residues 23-151 and 198-325; these read AGMY…AMVM and TWAG…YSVV.

The protein belongs to the drug/metabolite transporter (DMT) superfamily. Plant drug/metabolite exporter (P-DME) (TC 2.A.7.4) family.

The protein resides in the membrane. This Arabidopsis thaliana (Mouse-ear cress) protein is WAT1-related protein At4g08300.